We begin with the raw amino-acid sequence, 559 residues long: Nuclear envelope integral membrane protein (559 aa).

The N-terminal stretch at 1-15 (MRLLTLALLVAGSLA) is a signal peptide. Residues asparagine 67, asparagine 81, and asparagine 114 are each glycosylated (N-linked (GlcNAc...) asparagine). The next 5 helical transmembrane spans lie at 164–184 (YTSGCSFGLLASLLLVAFIVW), 192–212 (IGVPILIGGWSVSLYMLHFAW), 218–238 (IMIEYQKYVIGYFATVLLISM), 267–287 (LIYFSVQMVEVSTGTIGALII), and 290–310 (ICRGFLFAGIRWYFVGLKAVW). 2 N-linked (GlcNAc...) asparagine glycosylation sites follow: asparagine 408 and asparagine 465. 2 disordered regions span residues 475 to 494 (RRDSTPRHGNFQSEHRPRMP) and 510 to 559 (KNGR…DADE). The segment covering 517–526 (PSSSTASGMT) has biased composition (polar residues). Residues 530–539 (YMRKARRIDA) are compositionally biased toward basic and acidic residues.

This sequence belongs to the NEMP family.

It localises to the nucleus inner membrane. Its function is as follows. Contributes to nuclear envelope stiffness in germ cells. Required for fertility. This chain is Nuclear envelope integral membrane protein, found in Caenorhabditis elegans.